The following is a 293-amino-acid chain: Sodium-type flagellar protein MotY (293 aa).

The signal sequence occupies residues 1 to 21 (MNKWLITSGVMLSLLSANSYA). Residues 175–292 (YSFEDIAFTI…RVVISLGRTQ (118 aa)) enclose the OmpA-like domain.

The protein resides in the cell membrane. May play the role of a stator in the sodium flagellar motor, stabilizing the force-generating unit through direct interaction with the cell wall. This is Sodium-type flagellar protein MotY from Vibrio parahaemolyticus serotype O3:K6 (strain RIMD 2210633).